The sequence spans 1059 residues: MSSRPSSSASSRRSSSPFSAGSRRPPTSSSSSAGSYLTGRLMPRSYSTASSVSSSSHFFGGGGGSGGGSRSTTPGRRGSSSSSLVGPVPSPPSPVPFPSAEELVIEDTSRSGDSISVTIRFRPLSEREIQRGDEISWYADGERLVRCEYNPATAYGYDRVFGPKTTTEAVYDVAARPVVKGAMEGINGTVFAYGVTSSGKTHTMHGDQNCPGIIPLAIKDVFSLIQDTPGREFLLRVSYLEIYNEVINDLLDPTGQNLRVREDAQGTYVEGIKEEVVLSPGHALSFIAAGEEHRHVGSNNFNLFSSRSHTIFTLMIESSAHGDEYDGVMYSQLNLIDLAGSESSKTETTGLRRREGSYINKSLLTLGTVIGKLSEGRATHIPYRDSKLTRLLQSSLSGHGHVSLICTITPASSNMEETHNTLKFASRAKRVEIYAARNRMIDEKSLIKKYQREISSLKQELDQLRRGLIGGASQEEIMILRQQLEEGQVKMQSRLEEEEEAKAALMSRIQRLTKLILVSTKNNIPALTDTSSHQRHNSVNEEDKVSTSQDSSMLVQNDSATKDSLSSASPDAVDEINQLRCASGDHSSIAGSGPDEMQGGITASDQMDLLIEQVKMLAGEIAFGTSSLKRLIEQSIEDPEGTKNQIDNLEREIREKRRHMRALEQKLMESGEASVANASMMDMQQTITKLTAQCSEKAFELELRSADNRVLQEQLQQKNVEINELQEKVLRLEQQLTTNTEASPEQCTEHELHDLKSKLQLKEAESEKLKYEHMKITEENRELVNQNSTLCEEVAYAKELASSAAVELKNLAEEVTKLSVQNAKQAKELLIAQELAHSRVPGRKGRSAGRGRDEVGTWSLDLEDMKMELQARKQREAALEAALAEKEHLEEEYKKKFDEAKKKELSLENDLAGMWVLVAKLKRGALGISDLNVDDRSINLADITNGTKENKADKNVAVVEKQLSDNTVKSLTAEEYRNPEFEPLLVRLKAKIQEMKEKETDSLGDKDGNSHVCKVCFESATAAVLLPCRHFCLCKPCSLACSECPLCRTRIADRIITFT.

Composition is skewed to low complexity over residues Met-1–Ser-35 and Pro-43–Phe-58. Residues Met-1 to Thr-48 constitute a chloroplast transit peptide. The disordered stretch occupies residues Met-1–Ser-99. Gly residues predominate over residues Phe-59–Ser-69. Residues Arg-70–Pro-87 are compositionally biased toward low complexity. The span at Val-88–Phe-97 shows a compositional bias: pro residues. Positions Ser-114–Val-431 constitute a Kinesin motor domain. Residue Gly-194–Thr-201 coordinates ATP. The stretch at Ala-435 to Val-518 forms a coiled coil. Residues Ala-526–Pro-570 are disordered. The span at Ser-546–Ser-569 shows a compositional bias: polar residues. 3 coiled-coil regions span residues Glu-640–Ser-674, Glu-700–Arg-781, and Leu-862–Asp-910. The segment at Cys-1013 to Arg-1048 adopts an RING-type zinc-finger fold.

The protein belongs to the TRAFAC class myosin-kinesin ATPase superfamily. Kinesin family. KIN-7 subfamily.

Its subcellular location is the plastid. The protein resides in the chloroplast. This is Kinesin-like protein KIN-7K, chloroplastic from Oryza sativa subsp. japonica (Rice).